We begin with the raw amino-acid sequence, 318 residues long: Ribokinase (318 aa).

Substrate-binding positions include 12 to 14, 40 to 44, and glutamate 141; these read NWD and GKAAN. Residues asparagine 188 and 235–240 contribute to the ATP site; that span reads TLGGNG. The K(+) site is built by aspartate 264 and serine 266. 269–270 lines the ATP pocket; that stretch reads GD. Aspartate 270 is a binding site for substrate. Aspartate 270 functions as the Proton acceptor in the catalytic mechanism. 4 residues coordinate K(+): serine 301, arginine 304, glycine 306, and serine 310.

The protein belongs to the carbohydrate kinase PfkB family. Ribokinase subfamily. As to quaternary structure, homodimer. It depends on Mg(2+) as a cofactor.

Its subcellular location is the cytoplasm. It is found in the nucleus. It carries out the reaction D-ribose + ATP = D-ribose 5-phosphate + ADP + H(+). The protein operates within carbohydrate metabolism; D-ribose degradation; D-ribose 5-phosphate from beta-D-ribopyranose: step 2/2. Activated by a monovalent cation that binds near, but not in, the active site. The most likely occupant of the site in vivo is potassium. Ion binding induces a conformational change that may alter substrate affinity. Catalyzes the phosphorylation of ribose at O-5 in a reaction requiring ATP and magnesium. The resulting D-ribose-5-phosphate can then be used either for sythesis of nucleotides, histidine, and tryptophan, or as a component of the pentose phosphate pathway. This chain is Ribokinase (rbsk), found in Dictyostelium discoideum (Social amoeba).